Consider the following 299-residue polypeptide: Ethylmalonyl-CoA decarboxylase (299 aa).

N6-acetyllysine; alternate is present on K209. K209 is subject to N6-succinyllysine; alternate. An N6-succinyllysine modification is found at K293.

It belongs to the enoyl-CoA hydratase/isomerase family.

It localises to the cytoplasm. The protein resides in the cytosol. The catalysed reaction is (2S)-ethylmalonyl-CoA + H(+) = butanoyl-CoA + CO2. It catalyses the reaction (S)-methylmalonyl-CoA + H(+) = propanoyl-CoA + CO2. The enzyme catalyses (2R)-ethylmalonyl-CoA + H(+) = butanoyl-CoA + CO2. Decarboxylates ethylmalonyl-CoA, a potentially toxic metabolite, to form butyryl-CoA, suggesting it might be involved in metabolite proofreading. Acts preferentially on (S)-ethylmalonyl-CoA but also has some activity on the (R)-isomer. Also has methylmalonyl-CoA decarboxylase activity at lower level. This Rattus norvegicus (Rat) protein is Ethylmalonyl-CoA decarboxylase (Echdc1).